Here is a 172-residue protein sequence, read N- to C-terminus: Small ribosomal subunit protein uS5c (172 aa).

An S5 DRBM domain is found at 15–78; sequence WEEKVVQVKR…TDAKKHIINV (64 aa).

The protein belongs to the universal ribosomal protein uS5 family. Part of the 30S ribosomal subunit. Contacts protein S4.

The protein localises to the plastid. Its subcellular location is the chloroplast. Functionally, with S4 and S12 plays an important role in translational accuracy. In Gracilaria tenuistipitata var. liui (Red alga), this protein is Small ribosomal subunit protein uS5c (rps5).